A 207-amino-acid chain; its full sequence is A disintegrin and metalloproteinase with thrombospondin motifs 5 (207 aa).

Residues 1–74 (HAAFTVAHEI…GHGNCLLDLP (74 aa)) enclose the Peptidase M12B domain. Residue His-8 participates in Zn(2+) binding. Glu-9 is an active-site residue. Residues His-12 and His-18 each contribute to the Zn(2+) site. Intrachain disulfides connect Cys-24–Cys-53, Cys-95–Cys-117, Cys-106–Cys-127, Cys-112–Cys-146, and Cys-140–Cys-151. The region spanning 83–164 (ELPGQTYDAS…TKKKYYSTSS (82 aa)) is the Disintegrin domain. Asn-96 carries N-linked (GlcNAc...) asparagine glycosylation. One can recognise a TSP type-1 domain in the interval 165 to 205 (HGNWGSWGSWGQCSRSCGGGVQFAYRHCNNPAPKNNGRYCT). C-linked (Man) tryptophan glycans are attached at residues Trp-168 and Trp-171. The O-linked (Fuc...) serine glycan is linked to Ser-180.

Zn(2+) serves as cofactor. Post-translationally, the precursor is cleaved by furin and PCSK7 outside of the cell. Glycosylated. Can be O-fucosylated by POFUT2 on a serine or a threonine residue found within the consensus sequence C1-X(2)-(S/T)-C2-G of the TSP type-1 repeat domains where C1 and C2 are the first and second cysteine residue of the repeat, respectively. Fucosylated repeats can then be further glycosylated by the addition of a beta-1,3-glucose residue by the glucosyltransferase, B3GALTL. Fucosylation mediates the efficient secretion of ADAMTS family members. Can also be C-glycosylated with one or two mannose molecules on tryptophan residues within the consensus sequence W-X-X-W of the TPRs, and N-glycosylated. These other glycosylations can also facilitate secretion.

The protein localises to the secreted. It is found in the extracellular space. Its subcellular location is the extracellular matrix. Metalloproteinase that plays an important role in connective tissue organization, development, inflammation and cell migration. Extracellular matrix (ECM) degrading enzyme that shows proteolytic activity toward the hyalectan group of chondroitin sulfate proteoglycans (CSPGs) including ACAN, VCAN, BCAN and NCAN. Cleavage within the hyalectans occurs at Glu-Xaa recognition motifs. Plays a role in embryonic development, including limb and cardiac morphogenesis, and skeletal muscle development through its VCAN remodeling properties. Cleaves VCAN in the pericellular matrix surrounding myoblasts, facilitating myoblast contact and fusion which is required for skeletal muscle development and regeneration. Participates in the development of brown adipose tissue and browning of white adipose tissue. Plays an important role for T-lymphocyte migration from draining lymph nodes following viral infection. The protein is A disintegrin and metalloproteinase with thrombospondin motifs 5 (ADAMTS5) of Bos taurus (Bovine).